The following is a 392-amino-acid chain: Phospho-N-acetylmuramoyl-pentapeptide-transferase (392 aa).

A run of 11 helical transmembrane segments spans residues 24 to 44 (YLTMRAVMAALTALVIGLLAG), 76 to 96 (TMGGALILLSIAVSTLLWFDL), 100 to 120 (FVWIVLLVTLGFGTIGWVDDW), 137 to 157 (YFWQSVIGLLAALYLVFCISE), 170 to 190 (WVQSGFALDLPPKAGLLVPFF), 193 to 213 (VSYPLGVLGFVIMTYLVIVGA), 225 to 245 (GLAIMPVIMVGSALGIFAYVT), 262 to 282 (SGELLVYCAAMAGAGLAFLWF), 289 to 309 (VFMGDVGALALGASLGTIAVI), 314 to 334 (IVLAIMGGIFVVEALSVMLQV), and 369 to 389 (QVVIRFWIITMLLCLLGLSTL).

Belongs to the glycosyltransferase 4 family. MraY subfamily. The cofactor is Mg(2+).

Its subcellular location is the cell inner membrane. It catalyses the reaction UDP-N-acetyl-alpha-D-muramoyl-L-alanyl-gamma-D-glutamyl-meso-2,6-diaminopimeloyl-D-alanyl-D-alanine + di-trans,octa-cis-undecaprenyl phosphate = di-trans,octa-cis-undecaprenyl diphospho-N-acetyl-alpha-D-muramoyl-L-alanyl-D-glutamyl-meso-2,6-diaminopimeloyl-D-alanyl-D-alanine + UMP. It participates in cell wall biogenesis; peptidoglycan biosynthesis. Catalyzes the initial step of the lipid cycle reactions in the biosynthesis of the cell wall peptidoglycan: transfers peptidoglycan precursor phospho-MurNAc-pentapeptide from UDP-MurNAc-pentapeptide onto the lipid carrier undecaprenyl phosphate, yielding undecaprenyl-pyrophosphoryl-MurNAc-pentapeptide, known as lipid I. The sequence is that of Phospho-N-acetylmuramoyl-pentapeptide-transferase from Delftia acidovorans (strain DSM 14801 / SPH-1).